The primary structure comprises 246 residues: tRNA pseudouridine synthase A (246 aa).

Residue aspartate 52 is the Nucleophile of the active site. Residue tyrosine 111 participates in substrate binding.

Belongs to the tRNA pseudouridine synthase TruA family. As to quaternary structure, homodimer.

It catalyses the reaction uridine(38/39/40) in tRNA = pseudouridine(38/39/40) in tRNA. In terms of biological role, formation of pseudouridine at positions 38, 39 and 40 in the anticodon stem and loop of transfer RNAs. The chain is tRNA pseudouridine synthase A from Fervidobacterium nodosum (strain ATCC 35602 / DSM 5306 / Rt17-B1).